Consider the following 89-residue polypeptide: Putative regulatory protein BPUM_1466 (89 aa).

The protein belongs to the RemA family.

The sequence is that of Putative regulatory protein BPUM_1466 from Bacillus pumilus (strain SAFR-032).